Consider the following 413-residue polypeptide: Corticotropin-releasing factor receptor 2 (413 aa).

The not cleaved signal peptide spans 1 to 22 (MDSTIFEIIIDEFDANCSLLDA). Residues 1-110 (MDSTIFEIII…CVPILDNKRK (110 aa)) lie on the Extracellular side of the membrane. N-linked (GlcNAc...) asparagine glycosylation is present at Asn16. Disulfide bonds link Cys17/Cys53, Cys43/Cys86, and Cys67/Cys101. N-linked (GlcNAc...) asparagine glycosylation is found at Asn77, Asn89, and Asn97. Residues 111-141 (YALHYKIALIINYLGHCISILALVIAFLLFL) form a helical membrane-spanning segment. Residues 142–148 (CLRSIRC) lie on the Cytoplasmic side of the membrane. Residues 149 to 173 (LRNIIHWNLITTFILRNIMWFLLQM) form a helical membrane-spanning segment. Over 174–187 (IDHNIHESNEVWCR) the chain is Extracellular. Residues Cys186 and Cys256 are joined by a disulfide bond. The chain crosses the membrane as a helical span at residues 188–216 (CITTIYNYFVVTNFFWMFVEGCYLHTAIV). The Cytoplasmic segment spans residues 217–223 (MTYSTDK). A helical membrane pass occupies residues 224 to 251 (LRKWVFLFIGWCIPSPIIVTWAICKLFY). Topologically, residues 252-267 (ENEQCWIGKEPGKYID) are extracellular. The chain crosses the membrane as a helical span at residues 268-293 (YIYQGRVILVLLINFVFLFNIVRILM). At 294–304 (TKLRASTTSET) the chain is on the cytoplasmic side. Residues 305 to 329 (IQYRKAVKATLVLLPLLGITYMLFF) traverse the membrane as a helical segment. Residues 330–336 (VNPGEDD) lie on the Extracellular side of the membrane. A helical membrane pass occupies residues 337–366 (VSQIVFIYFNSFLQSFQGFFVSVFYCFLNG). Topologically, residues 367 to 413 (EVRSAARKRWHRWQDHHSLRVRVARAMSIPTSPTRISFHSIKQTAAV) are cytoplasmic.

The protein belongs to the G-protein coupled receptor 2 family. An N-glycosylation site within the signal peptide impedes its proper cleavage and function.

It localises to the cell membrane. In terms of biological role, G-protein coupled receptor for CRH (corticotropin-releasing factor), UCN (urocortin), UCN2 and UCN3. Has high affinity for UCN. Ligand binding causes a conformation change that triggers signaling via guanine nucleotide-binding proteins (G proteins) and down-stream effectors, such as adenylate cyclase. Promotes the activation of adenylate cyclase, leading to increased intracellular cAMP levels. In Xenopus laevis (African clawed frog), this protein is Corticotropin-releasing factor receptor 2 (crhr2).